Consider the following 611-residue polypeptide: MSQAGVDRLLRGLQLLLLVLRLSAGYFPEERWNPESSLRNPTVLIALLARNSEGSLPEVLGALDTLHYPKERISLWVATDHNLDNTTEILREWLINVQNQYHHVEWRPQEHPRWFKDEEGPKHWSHSRYEYIMKLRQAALTSAREMWADYIFFLDADNLLTNPETLNLLIAENKTVVAPMLDSRAAYSNFWCGMTTQGYYRRTPAYMPIRRRERRGCFPVPMVHSTFLIDLRKEASQQLNFYPPHADYTWAFDDIIVFAFSCRQADVQMFLCNKEIYGHLPVPLRSHGTLLDEADNFVHTKLEVMVKGPPLNLSSFVTIPEKVPDKMSFDEVFLINLKHRQDRRERMKRTLYELQIDYKLVDAVYGKTLNQTQVSELGIKMLPDYKDPYHGRPLTRGEMGCFLSHYNIWKEISERNLAVSAVFEDDLRFEIYFKRRLQTLLHDLETAKLDWDLIYLGRKRMQVDEPEEPVPGVRNLVVSDYSYWTLGYLISLRGAKKLLNAEPLVKMLPVDEFLPVMYDKHPISDYSSHFSPRDLLAFSVEPLLLYPTHYTGDEGYISDTETSVLWDNLTEPTDWDRAKSRKTQQQEKLRSEALNSPSLGSPFDNTARDEL.

The N-terminal stretch at 1–24 (MSQAGVDRLLRGLQLLLLVLRLSA) is a signal peptide. Residues asparagine 85, asparagine 173, asparagine 312, asparagine 370, and asparagine 568 are each glycosylated (N-linked (GlcNAc...) asparagine). Residues 575 to 591 (WDRAKSRKTQQQEKLRS) are compositionally biased toward basic and acidic residues. Residues 575–611 (WDRAKSRKTQQQEKLRSEALNSPSLGSPFDNTARDEL) are disordered. The Prevents secretion from ER motif lies at 608 to 611 (RDEL).

This sequence belongs to the glycosyltransferase 25 family.

The protein localises to the endoplasmic reticulum lumen. The catalysed reaction is (5R)-5-hydroxy-L-lysyl-[collagen] + UDP-alpha-D-galactose = (5R)-5-O-(beta-D-galactosyl)-5-hydroxy-L-lysyl-[collagen] + UDP + H(+). Its function is as follows. Beta-galactosyltransferase that transfers beta-galactose to hydroxylysine residues of type I collagen. By acting on collagen glycosylation, facilitates the formation of collagen triple helix. This is Procollagen galactosyltransferase 1-A (colgalt1-a) from Xenopus laevis (African clawed frog).